Consider the following 303-residue polypeptide: Dihydroorotate dehydrogenase B (NAD(+)), catalytic subunit (303 aa).

Residues Ser-21 and 45–46 each bind FMN; that span reads KG. Substrate contacts are provided by residues Lys-45 and 69-73; that span reads NAVGL. Residues Asn-99 and Asn-127 each contribute to the FMN site. Substrate is bound at residue Asn-127. The active-site Nucleophile is Cys-130. FMN is bound by residues Lys-165 and Ile-191. Residue 192–193 coordinates substrate; that stretch reads NT. Residues Gly-217, 243–244, and 265–266 each bind FMN; these read GG and GT.

Belongs to the dihydroorotate dehydrogenase family. Type 1 subfamily. In terms of assembly, heterotetramer of 2 PyrK and 2 PyrD type B subunits. Requires FMN as cofactor.

The protein resides in the cytoplasm. It carries out the reaction (S)-dihydroorotate + NAD(+) = orotate + NADH + H(+). It functions in the pathway pyrimidine metabolism; UMP biosynthesis via de novo pathway; orotate from (S)-dihydroorotate (NAD(+) route): step 1/1. Its function is as follows. Catalyzes the conversion of dihydroorotate to orotate with NAD(+) as electron acceptor. This Bacteroides thetaiotaomicron (strain ATCC 29148 / DSM 2079 / JCM 5827 / CCUG 10774 / NCTC 10582 / VPI-5482 / E50) protein is Dihydroorotate dehydrogenase B (NAD(+)), catalytic subunit (pyrD).